A 717-amino-acid polypeptide reads, in one-letter code: Catalase-peroxidase (717 aa).

The first 12 residues, 1 to 12 (MTSKGMCPVAHG), serve as a signal peptide directing secretion. Positions 93–221 (WHSAGSYRIA…LAAVMMGLIY (129 aa)) form a cross-link, tryptophyl-tyrosyl-methioninium (Trp-Tyr) (with M-247). H94 acts as the Proton acceptor in catalysis. The segment at residues 221–247 (YVNPEGVDGKPDPLKTAQDMRVTFARM) is a cross-link (tryptophyl-tyrosyl-methioninium (Tyr-Met) (with W-93)). H262 contributes to the heme b binding site.

Belongs to the peroxidase family. Peroxidase/catalase subfamily. As to quaternary structure, homodimer or homotetramer. It depends on heme b as a cofactor. In terms of processing, formation of the three residue Trp-Tyr-Met cross-link is important for the catalase, but not the peroxidase activity of the enzyme.

It carries out the reaction H2O2 + AH2 = A + 2 H2O. The enzyme catalyses 2 H2O2 = O2 + 2 H2O. Functionally, bifunctional enzyme with both catalase and broad-spectrum peroxidase activity. The chain is Catalase-peroxidase from Polynucleobacter asymbioticus (strain DSM 18221 / CIP 109841 / QLW-P1DMWA-1) (Polynucleobacter necessarius subsp. asymbioticus).